Here is a 441-residue protein sequence, read N- to C-terminus: Argininosuccinate lyase (441 aa).

This sequence belongs to the lyase 1 family. Argininosuccinate lyase subfamily.

It localises to the cytoplasm. The enzyme catalyses 2-(N(omega)-L-arginino)succinate = fumarate + L-arginine. It participates in amino-acid biosynthesis; L-arginine biosynthesis; L-arginine from L-ornithine and carbamoyl phosphate: step 3/3. The sequence is that of Argininosuccinate lyase from Thermoanaerobacter pseudethanolicus (strain ATCC 33223 / 39E) (Clostridium thermohydrosulfuricum).